The primary structure comprises 79 residues: Large ribosomal subunit protein bL31 (79 aa).

It belongs to the bacterial ribosomal protein bL31 family. Type A subfamily. Part of the 50S ribosomal subunit.

In terms of biological role, binds the 23S rRNA. The chain is Large ribosomal subunit protein bL31 from Trichormus variabilis (strain ATCC 29413 / PCC 7937) (Anabaena variabilis).